The following is a 119-amino-acid chain: Chorion class CA protein ERA.2 (119 aa).

Positions 1–21 (MSKLVVFLFCIQVCFIQNVYS) are cleaved as a signal peptide. The tract at residues 22 to 55 (QCLGRVGPGGPPLGPYGGPLGGPGYGPVGYGGCG) is left arm. Residues 56–103 (GYGGSGIGNVAVAGELPVAGSTGVTGQVPVIGAVEFAGPACAVGSVSI) form a central domain region. The segment at 104–119 (SGACGPTCGCGGSPFY) is right arm.

Belongs to the chorion protein family.

Functionally, this protein is one of many from the eggshell of the silk moth. This is Chorion class CA protein ERA.2 (ERA.2) from Bombyx mori (Silk moth).